Here is a 374-residue protein sequence, read N- to C-terminus: Ras-related GTP-binding protein B (374 aa).

Met1 is subject to N-acetylmethionine. Basic and acidic residues predominate over residues 1 to 15; the sequence is MEESDSEKKTEKENV. Residues 1-30 are disordered; the sequence is MEESDSEKKTEKENVGPKVEPPLGEPEGSL. The GTP site is built by Ser49 and Gly50. 8 residues coordinate GDP: Gly50, Ser51, Gly52, Lys53, Thr54, Ser55, Thr69, and Thr75. Gly52, Lys53, Thr54, Ser55, Thr69, Thr75, Gly126, and His188 together coordinate GTP. Positions 188 and 191 each coordinate GDP. A Glycyl lysine isopeptide (Lys-Gly) (interchain with G-Cter in ubiquitin) cross-link involves residue Lys203. Residues Leu209 and Ile225 each coordinate GDP. Ile225 serves as a coordination point for GTP. Glycyl lysine isopeptide (Lys-Gly) (interchain with G-Cter in ubiquitin) cross-links involve residues Lys281, Lys291, and Lys305.

This sequence belongs to the GTR/RAG GTP-binding protein family. In terms of assembly, interacts with RRAGC and RRAGD; heterodimerization stabilizes RRAG proteins. The GTP-bound form of RRAGB (in complex with the GDP-bound form of RRAGC or RRAGD) interacts with RPTOR, thereby promoting recruitment of mTORC1 to the lysosomes. Component of the lysosomal folliculin complex (LFC), composed of FLCN, FNIP1 (or FNIP2), RagA/RRAGA or RagB/RRAGB GDP-bound, RagC/RRAGC or RagD/RRAGD GTP-bound, and Ragulator. Interacts with SH3BP4; the interaction with this negative regulator is most probably direct, preferentially occurs with the inactive GDP-bound form of RRAGB, is negatively regulated by amino acids and prevents interaction with RPTOR. Interacts with the GATOR1 complex; inactivates RRAGB. The Rag heterodimer interacts with SLC38A9; the probable amino acid sensor. Interacts with SESN1, SESN2 and SESN3.

It localises to the cytoplasm. The protein localises to the lysosome membrane. It carries out the reaction GTP + H2O = GDP + phosphate + H(+). Its activity is regulated as follows. The activation of GTP-binding proteins is generally mediated by a guanine exchange factor (GEF), while inactivation through hydrolysis of bound GTP is catalyzed by a GTPase activating protein (GAP). The Ragulator complex functions as a GEF and promotes the active GTP-bound form. The GATOR1 complex functions as a GAP and stimulates RRAGB GTPase activity to turn it into its inactive GDP-bound form, preventing mTORC1 recruitment and activation. Its function is as follows. Guanine nucleotide-binding protein that plays a crucial role in the cellular response to amino acid availability through regulation of the mTORC1 signaling cascade. Forms heterodimeric Rag complexes with RagC/RRAGC or RagD/RRAGD and cycles between an inactive GDP-bound and an active GTP-bound form: RagB/RRAGB is in its active form when GTP-bound RagB/RRAGB forms a complex with GDP-bound RagC/RRAGC (or RagD/RRAGD) and in an inactive form when GDP-bound RagB/RRAGB heterodimerizes with GTP-bound RagC/RRAGC (or RagD/RRAGD). In its GTP-bound active form, promotes the recruitment of mTORC1 to the lysosomes and its subsequent activation by the GTPase RHEB. Involved in the RCC1/Ran-GTPase pathway. The sequence is that of Ras-related GTP-binding protein B from Mus musculus (Mouse).